The sequence spans 2217 residues: Protein irg-7 (2217 aa).

A signal peptide spans 1-16 (MRNWVLIAALAVICLA). EGF-like domains follow at residues 370-405 (SGSTCSQMLCANGGFLPTPTSDRCQCPEGFSGFHCQ) and 864-896 (TGTYCQNIICYNGGTASGDHCVCPPGYAGESCE). Intrachain disulfides connect cysteine 379-cysteine 393, cysteine 395-cysteine 404, cysteine 868-cysteine 873, cysteine 886-cysteine 895, cysteine 1212-cysteine 1312, cysteine 1285-cysteine 1304, cysteine 1508-cysteine 1521, and cysteine 1523-cysteine 1532. The region spanning 1188 to 1313 (IGQYCIKFMA…CAEPRAFACQ (126 aa)) is the C-type lectin domain. The EGF-like 3 domain occupies 1499 to 1533 (TGSRCTVPICVNGGTRNPDEATCSCPDGYEGPNCQ). One can recognise a VWFA domain in the interval 2016–2202 (DVVFMIDGSQ…NNQIKTIQQL (187 aa)).

The protein localises to the secreted. Its function is as follows. Plays a role in innate immunity, probably via the atf-7 pathway, to confer resistance to pathogenic bacteria. May also play a role in the regulation of longevity. This chain is Protein irg-7, found in Caenorhabditis elegans.